Here is a 167-residue protein sequence, read N- to C-terminus: Lipoprotein signal peptidase (167 aa).

The next 3 helical transmembrane spans lie at 10–30 (LIWL…KAWV), 68–88 (WQMW…TFWL), and 98–118 (SALP…DRFL). Catalysis depends on residues Asp-124 and Asp-142. Residues 138–158 (FNLADSAIVAGAIGIGLLSLF) form a helical membrane-spanning segment.

The protein belongs to the peptidase A8 family.

Its subcellular location is the cell inner membrane. The catalysed reaction is Release of signal peptides from bacterial membrane prolipoproteins. Hydrolyzes -Xaa-Yaa-Zaa-|-(S,diacylglyceryl)Cys-, in which Xaa is hydrophobic (preferably Leu), and Yaa (Ala or Ser) and Zaa (Gly or Ala) have small, neutral side chains.. The protein operates within protein modification; lipoprotein biosynthesis (signal peptide cleavage). Functionally, this protein specifically catalyzes the removal of signal peptides from prolipoproteins. The chain is Lipoprotein signal peptidase from Xylella fastidiosa (strain 9a5c).